A 240-amino-acid chain; its full sequence is Aquaporin Z (240 aa).

2 consecutive transmembrane segments (helical) span residues 10-30 (MIGT…AAGF) and 35-55 (IGLV…AYAI). Positions 64–66 (NPA) match the NPA 1 motif. A run of 3 helical transmembrane segments spans residues 90–110 (VLGA…AAGF), 131–151 (LVAC…VIMG), and 160–180 (GFAP…SIPV). The short motif at 186 to 188 (NPA) is the NPA 2 element. The chain crosses the membrane as a helical span at residues 202–222 (IGQLWLFWVAPLLGGVLGGVI).

The protein belongs to the MIP/aquaporin (TC 1.A.8) family. Homotetramer.

The protein localises to the cell inner membrane. It carries out the reaction H2O(in) = H2O(out). Channel that permits osmotically driven movement of water in both directions. It is involved in the osmoregulation and in the maintenance of cell turgor during volume expansion in rapidly growing cells. It mediates rapid entry or exit of water in response to abrupt changes in osmolarity. The polypeptide is Aquaporin Z (Rhodopseudomonas palustris (strain ATCC BAA-98 / CGA009)).